Reading from the N-terminus, the 167-residue chain is MRRAHRAGERVMMKRFGIALLAVAIAAGASSLTAQTVTSGLHGPAPLNDEGPAPPMLPNRNTSEREVRNYPEQPPVIPHTIDGYQVDLNGNKCLSCHARARTAESQAPMVSITHFMDRDGQFWPSISPRRFFCTECHVPQNTATPPVSNDFTDIDTLLSRASPGGRR.

Positions methionine 1 to alanine 34 are cleaved as a signal peptide. The tract at residues glycine 40–arginine 65 is disordered. The heme c site is built by histidine 79, cysteine 93, cysteine 96, histidine 97, histidine 114, cysteine 133, cysteine 136, and histidine 137.

It belongs to the NapB family. As to quaternary structure, component of the periplasmic nitrate reductase NapAB complex composed of NapA and NapB. Binds 2 heme C groups per subunit.

Its subcellular location is the periplasm. Its function is as follows. Electron transfer subunit of the periplasmic nitrate reductase complex NapAB. Receives electrons from the membrane-anchored tetraheme c-type NapC protein and transfers these to NapA subunit, thus allowing electron flow between membrane and periplasm. Essential for periplasmic nitrate reduction with nitrate as the terminal electron acceptor. The protein is Periplasmic nitrate reductase, electron transfer subunit of Bradyrhizobium japonicum.